The following is a 65-amino-acid chain: Large ribosomal subunit protein bL35 (65 aa).

Basic residues predominate over residues 1–15 (MPKMKTKKSASKRFQ). A disordered region spans residues 1–27 (MPKMKTKKSASKRFQVRGSGSIKRGQA).

The protein belongs to the bacterial ribosomal protein bL35 family.

This Bordetella petrii (strain ATCC BAA-461 / DSM 12804 / CCUG 43448) protein is Large ribosomal subunit protein bL35.